The sequence spans 502 residues: Capsid protein (502 aa).

2 disordered regions span residues 369–392 (ISEL…SDYD) and 405–487 (LTDS…TRKQ). Residues 447 to 456 (SRRRKRRRRS) are compositionally biased toward basic residues.

This sequence belongs to the anelloviridae capsid protein family.

It is found in the virion. In terms of biological role, self-assembles to form an icosahedral capsid with a T=1 symmetry, about 30 nm in diameter, and consisting of 60 capsid proteins. The capsid encapsulates the genomic DNA. Capsid protein is involved in attachment and entry into the host cell. The chain is Capsid protein from Tupaia.